Consider the following 688-residue polypeptide: G protein-coupled receptor kinase 3 (688 aa).

Positions 1-190 are N-terminal; that stretch reads MADLEAVLAD…ELNIHLSMND (190 aa). An RGS domain is found at 54 to 175; the sequence is TFDKIFNQKI…MESEKFTRFC (122 aa). Positions 191–453 constitute a Protein kinase domain; that stretch reads FSVHRIIGRG…ARELKEHIFF (263 aa). ATP contacts are provided by residues 197 to 205 and Lys-220; that span reads IGRGGFGEV. Residue Asp-317 is the Proton acceptor of the active site. Positions 454–521 constitute an AGC-kinase C-terminal domain; it reads KGIDWQYVYL…MISERWQQEV (68 aa). The PH domain occupies 558-652; sequence DCIMHGYMLK…WLKELTCTFN (95 aa).

It belongs to the protein kinase superfamily. AGC Ser/Thr protein kinase family. GPRK subfamily. Interacts with GIT1. Ubiquitinated. In terms of tissue distribution, expressed in brain cortex, hippocampus, striatum, hypothalamus, cerebellum and brainstem (at protein level).

It localises to the postsynapse. It is found in the presynapse. It catalyses the reaction [beta-adrenergic receptor] + ATP = [beta-adrenergic receptor]-phosphate + ADP + H(+). In terms of biological role, specifically phosphorylates the agonist-occupied form of the beta-adrenergic and closely related receptors. The chain is G protein-coupled receptor kinase 3 from Rattus norvegicus (Rat).